A 569-amino-acid polypeptide reads, in one-letter code: uncharacterized protein (569 aa).

Positions 1-21 are cleaved as a signal peptide; sequence MLCVMMLLFSAIASFPVSAQA. The Extracellular segment spans residues 22-530; it reads KDQDAGILII…DHHRQTPLEK (509 aa). A helical transmembrane segment spans residues 531–551; the sequence is ALWILSAVVLLFVIMFVSYTF. Residues 552 to 569 lie on the Cytoplasmic side of the membrane; that stretch reads YLRATLKKRIFKERRSLG.

Its subcellular location is the cell membrane. This is an uncharacterized protein from Bacillus subtilis (strain 168).